The sequence spans 270 residues: uncharacterized protein (270 aa).

Residues 1-22 (MEYIKKLLCTMSVLLLIIFIGG) form the signal peptide. C23 carries N-palmitoyl cysteine lipidation. C23 carries S-diacylglycerol cysteine lipidation.

It belongs to the staphylococcal tandem lipoprotein family.

It localises to the cell membrane. This is an uncharacterized protein from Staphylococcus aureus (strain bovine RF122 / ET3-1).